Consider the following 416-residue polypeptide: Gamma-glutamyl phosphate reductase (416 aa).

It belongs to the gamma-glutamyl phosphate reductase family.

The protein localises to the cytoplasm. It carries out the reaction L-glutamate 5-semialdehyde + phosphate + NADP(+) = L-glutamyl 5-phosphate + NADPH + H(+). It functions in the pathway amino-acid biosynthesis; L-proline biosynthesis; L-glutamate 5-semialdehyde from L-glutamate: step 2/2. In terms of biological role, catalyzes the NADPH-dependent reduction of L-glutamate 5-phosphate into L-glutamate 5-semialdehyde and phosphate. The product spontaneously undergoes cyclization to form 1-pyrroline-5-carboxylate. The chain is Gamma-glutamyl phosphate reductase from Salmonella newport (strain SL254).